A 355-amino-acid polypeptide reads, in one-letter code: Guanine nucleotide-binding protein G(z) subunit alpha (355 aa).

Residues 1-14 (MGCRQSSEEKEAAR) show a composition bias toward basic and acidic residues. Positions 1 to 26 (MGCRQSSEEKEAARRSRRIDRHLRSE) are disordered. G2 carries N-myristoyl glycine lipidation. The S-palmitoyl cysteine moiety is linked to residue C3. The 324-residue stretch at 32 to 355 (REIKLLLLGT…QNNLKYIGLC (324 aa)) folds into the G-alpha domain. The tract at residues 35-48 (KLLLLGTSNSGKST) is G1 motif. GTP is bound by residues 40–47 (GTSNSGKS), 176–182 (LRSRDMT), 201–205 (DVGGQ), 270–273 (NKKD), and A327. The Mg(2+) site is built by S47 and T182. Positions 174–182 (DILRSRDMT) are G2 motif. The interval 197–206 (FKMVDVGGQR) is G3 motif. The interval 266-273 (ILFLNKKD) is G4 motif. The tract at residues 325-330 (TCATDT) is G5 motif.

Belongs to the G-alpha family. G(i/o/t/z) subfamily. G-proteins are composed of 3 units; alpha, beta and gamma. The alpha chain contains the guanine nucleotide binding site. Interacts with ADGRB2.

The protein localises to the membrane. Functionally, guanine nucleotide-binding proteins (G proteins) are involved as modulators or transducers in various transmembrane signaling systems. The polypeptide is Guanine nucleotide-binding protein G(z) subunit alpha (Gnaz) (Rattus norvegicus (Rat)).